Reading from the N-terminus, the 172-residue chain is Shikimate kinase (172 aa).

ATP is bound at residue 11 to 16 (GAGKST). Serine 15 contributes to the Mg(2+) binding site. The substrate site is built by aspartate 33, arginine 57, and glycine 79. Arginine 117 serves as a coordination point for ATP. Arginine 136 contacts substrate. ATP is bound at residue arginine 153.

This sequence belongs to the shikimate kinase family. In terms of assembly, monomer. Mg(2+) serves as cofactor.

It localises to the cytoplasm. It carries out the reaction shikimate + ATP = 3-phosphoshikimate + ADP + H(+). It participates in metabolic intermediate biosynthesis; chorismate biosynthesis; chorismate from D-erythrose 4-phosphate and phosphoenolpyruvate: step 5/7. Functionally, catalyzes the specific phosphorylation of the 3-hydroxyl group of shikimic acid using ATP as a cosubstrate. The sequence is that of Shikimate kinase from Pseudomonas putida (strain ATCC 700007 / DSM 6899 / JCM 31910 / BCRC 17059 / LMG 24140 / F1).